The following is a 454-amino-acid chain: Bleomycin hydrolase (454 aa).

At Met1 the chain carries N-acetylmethionine. Catalysis depends on residues Cys73 and His372. An N6-acetyllysine modification is found at Lys391. The active site involves Asn396.

It belongs to the peptidase C1 family. As to quaternary structure, homohexamer. Interacts with NUDT12 (via ANK repeats). As to expression, expressed at relatively higher levels in the stomach, esophagus, spleen, thymus and testis, and at lower levels in the skin, lung and skeletal muscle.

Its subcellular location is the cytoplasm. It is found in the cytoplasmic granule. The enzyme catalyses Inactivates bleomycin B2 (a cytotoxic glycometallopeptide) by hydrolysis of a carboxyamide bond of beta-aminoalanine, but also shows general aminopeptidase activity. The specificity varies somewhat with source, but amino acid arylamides of Met, Leu and Ala are preferred.. Its function is as follows. The normal physiological role of BLM hydrolase is unknown, but it catalyzes the inactivation of the antitumor drug BLM (a glycopeptide) by hydrolyzing the carboxamide bond of its B-aminoalaninamide moiety thus protecting normal and malignant cells from BLM toxicity. Binds single-stranded DNA with higher affinity than double-stranded DNA. May play an important role in the metabolism of antibiotics. This is Bleomycin hydrolase (Blmh) from Rattus norvegicus (Rat).